Reading from the N-terminus, the 110-residue chain is Iron-sulfur cluster assembly protein CyaY (110 aa).

This sequence belongs to the frataxin family.

Its function is as follows. Involved in iron-sulfur (Fe-S) cluster assembly. May act as a regulator of Fe-S biogenesis. In Pseudomonas syringae pv. tomato (strain ATCC BAA-871 / DC3000), this protein is Iron-sulfur cluster assembly protein CyaY.